Here is a 125-residue protein sequence, read N- to C-terminus: Small ribosomal subunit protein uS12 (125 aa).

3-methylthioaspartic acid is present on D89.

Belongs to the universal ribosomal protein uS12 family. Part of the 30S ribosomal subunit. Contacts proteins S8 and S17. May interact with IF1 in the 30S initiation complex.

With S4 and S5 plays an important role in translational accuracy. In terms of biological role, interacts with and stabilizes bases of the 16S rRNA that are involved in tRNA selection in the A site and with the mRNA backbone. Located at the interface of the 30S and 50S subunits, it traverses the body of the 30S subunit contacting proteins on the other side and probably holding the rRNA structure together. The combined cluster of proteins S8, S12 and S17 appears to hold together the shoulder and platform of the 30S subunit. In Ralstonia nicotianae (strain ATCC BAA-1114 / GMI1000) (Ralstonia solanacearum), this protein is Small ribosomal subunit protein uS12.